We begin with the raw amino-acid sequence, 167 residues long: Transcription factor HES-5 (167 aa).

A bHLH domain is found at 16–72; sequence KNRLRKPVVEKMRRDRINSSIEQLKLLLEQEFARHQPNSKLEKADILEMAVSYLKHS. Residues 88-119 form the Orange domain; the sequence is YSEGYSWCLQEAVQFLTLHAASDTQMKLLYHF. The span at 124–138 shows a compositional bias: pro residues; that stretch reads APAAPAKEPPAPGAA. Residues 124–167 are disordered; that stretch reads APAAPAKEPPAPGAAPQPARSSAKAAAAAVSTSRQPACGLWRPW. Positions 139 to 160 are enriched in low complexity; it reads PQPARSSAKAAAAAVSTSRQPA. The WRPW motif signature appears at 164 to 167; it reads WRPW.

In terms of assembly, transcription repression requires formation of a complex with a corepressor protein of the Groucho/TLE family.

It is found in the nucleus. In terms of biological role, transcriptional repressor of genes that require a bHLH protein for their transcription. Plays an important role as neurogenesis negative regulator. This is Transcription factor HES-5 (Hes5) from Mus musculus (Mouse).